The following is a 749-amino-acid chain: 1,4-alpha-glucan branching enzyme GlgB (749 aa).

Aspartate 427 acts as the Nucleophile in catalysis. Glutamate 480 functions as the Proton donor in the catalytic mechanism.

Belongs to the glycosyl hydrolase 13 family. GlgB subfamily. In terms of assembly, monomer.

The enzyme catalyses Transfers a segment of a (1-&gt;4)-alpha-D-glucan chain to a primary hydroxy group in a similar glucan chain.. Its pathway is glycan biosynthesis; glycogen biosynthesis. Functionally, catalyzes the formation of the alpha-1,6-glucosidic linkages in glycogen by scission of a 1,4-alpha-linked oligosaccharide from growing alpha-1,4-glucan chains and the subsequent attachment of the oligosaccharide to the alpha-1,6 position. This chain is 1,4-alpha-glucan branching enzyme GlgB, found in Thermobifida fusca (strain YX).